A 105-amino-acid chain; its full sequence is Cell division protein FtsB (105 aa).

At Met-1–Pro-3 the chain is on the cytoplasmic side. The helical transmembrane segment at Phe-4–Phe-21 threads the bilayer. At Gly-22 to Gln-105 the chain is on the periplasmic side. A coiled-coil region spans residues His-38 to Leu-75.

This sequence belongs to the FtsB family. As to quaternary structure, part of a complex composed of FtsB, FtsL and FtsQ.

It localises to the cell inner membrane. Essential cell division protein. May link together the upstream cell division proteins, which are predominantly cytoplasmic, with the downstream cell division proteins, which are predominantly periplasmic. This chain is Cell division protein FtsB, found in Shewanella amazonensis (strain ATCC BAA-1098 / SB2B).